The primary structure comprises 179 residues: Segregation and condensation protein B (179 aa).

It belongs to the ScpB family. In terms of assembly, homodimer. Homodimerization may be required to stabilize the binding of ScpA to the Smc head domains. Component of a cohesin-like complex composed of ScpA, ScpB and the Smc homodimer, in which ScpA and ScpB bind to the head domain of Smc. The presence of the three proteins is required for the association of the complex with DNA.

The protein resides in the cytoplasm. Functionally, participates in chromosomal partition during cell division. May act via the formation of a condensin-like complex containing Smc and ScpA that pull DNA away from mid-cell into both cell halves. The protein is Segregation and condensation protein B of Staphylococcus haemolyticus (strain JCSC1435).